The following is a 59-amino-acid chain: Large ribosomal subunit protein uL30 (59 aa).

This sequence belongs to the universal ribosomal protein uL30 family. In terms of assembly, part of the 50S ribosomal subunit.

This chain is Large ribosomal subunit protein uL30, found in Stutzerimonas stutzeri (strain A1501) (Pseudomonas stutzeri).